We begin with the raw amino-acid sequence, 357 residues long: Probable cinnamyl alcohol dehydrogenase 7/8 (357 aa).

Position 47 (Cys47) interacts with Zn(2+). Ser49 provides a ligand contact to NADP(+). Zn(2+)-binding residues include His69, Glu70, Cys100, Cys103, Cys106, Cys114, and Cys163. Residues Thr167, 188-193 (GLGGVG), 211-216 (SSSDKK), Thr251, Gly275, and 298-300 (SFI) contribute to the NADP(+) site.

This sequence belongs to the zinc-containing alcohol dehydrogenase family. In terms of assembly, homodimer. Requires Zn(2+) as cofactor.

The catalysed reaction is (E)-cinnamyl alcohol + NADP(+) = (E)-cinnamaldehyde + NADPH + H(+). The enzyme catalyses (E)-coniferol + NADP(+) = (E)-coniferaldehyde + NADPH + H(+). It carries out the reaction (E)-sinapyl alcohol + NADP(+) = (E)-sinapaldehyde + NADPH + H(+). It catalyses the reaction (E)-4-coumaroyl alcohol + NADP(+) = (E)-4-coumaraldehyde + NADPH + H(+). The catalysed reaction is (E)-caffeyl alcohol + NADP(+) = (E)-caffeyl aldehyde + NADPH + H(+). It functions in the pathway aromatic compound metabolism; phenylpropanoid biosynthesis. Functionally, involved in lignin biosynthesis. Catalyzes the final step specific for the production of lignin monomers. Catalyzes the NADPH-dependent reduction of coniferaldehyde, 5-hydroxyconiferaldehyde, sinapaldehyde, 4-coumaraldehyde and caffeyl aldehyde to their respective alcohols. The polypeptide is Probable cinnamyl alcohol dehydrogenase 7/8 (CAD7) (Picea abies (Norway spruce)).